Here is a 293-residue protein sequence, read N- to C-terminus: Ribosomal RNA small subunit methyltransferase A (293 aa).

The S-adenosyl-L-methionine site is built by asparagine 33, valine 35, glycine 60, glutamate 81, aspartate 111, and asparagine 130.

This sequence belongs to the class I-like SAM-binding methyltransferase superfamily. rRNA adenine N(6)-methyltransferase family. RsmA subfamily.

The protein resides in the cytoplasm. It catalyses the reaction adenosine(1518)/adenosine(1519) in 16S rRNA + 4 S-adenosyl-L-methionine = N(6)-dimethyladenosine(1518)/N(6)-dimethyladenosine(1519) in 16S rRNA + 4 S-adenosyl-L-homocysteine + 4 H(+). Its function is as follows. Specifically dimethylates two adjacent adenosines (A1518 and A1519) in the loop of a conserved hairpin near the 3'-end of 16S rRNA in the 30S particle. May play a critical role in biogenesis of 30S subunits. The protein is Ribosomal RNA small subunit methyltransferase A of Corynebacterium glutamicum (strain ATCC 13032 / DSM 20300 / JCM 1318 / BCRC 11384 / CCUG 27702 / LMG 3730 / NBRC 12168 / NCIMB 10025 / NRRL B-2784 / 534).